We begin with the raw amino-acid sequence, 241 residues long: Golgi-associated RAB2 interactor protein 6 (241 aa).

This sequence belongs to the GARIN family.

The sequence is that of Golgi-associated RAB2 interactor protein 6 from Homo sapiens (Human).